The primary structure comprises 329 residues: Neuropeptides B/W receptor type 1 (329 aa).

At 1–39 (MHNLSLFEPGRGNVSCGGPFLGCPNESNPAPLPLPQPLA) the chain is on the extracellular side. N-linked (GlcNAc...) asparagine glycosylation is found at Asn-3, Asn-13, and Asn-25. The chain crosses the membrane as a helical span at residues 40–63 (VAVPVVYGVICAVGLAGNSAVLYV). Over 64 to 74 (LLRTPRMKTVT) the chain is Cytoplasmic. A helical transmembrane segment spans residues 75–99 (NVFILNLAIADELFTLVLPINIADF). Over 100 to 114 (LLRRWPFGEVMCKLI) the chain is Extracellular. Cys-111 and Cys-190 form a disulfide bridge. The helical transmembrane segment at 115–134 (VAVDQYNTFSSLYFLAVMSA) threads the bilayer. Over 135-159 (DRYLVVLATAESRRVSGRTYGAARA) the chain is Cytoplasmic. The chain crosses the membrane as a helical span at residues 160 to 179 (VSLAVWALVTLVVLPFAVFA). The Extracellular segment spans residues 180 to 204 (RLDEEQGRRQCVLVFPQPEAFWWRA). The chain crosses the membrane as a helical span at residues 205 to 226 (SRLYTLVLGFAIPVSTICALYI). Residues 227–250 (TLLCRLRAIQLDSHAKALDRAKKR) are Cytoplasmic-facing. The chain crosses the membrane as a helical span at residues 251–275 (VTLLVVAILAVCLLCWTPYHLSTIV). The Extracellular portion of the chain corresponds to 276 to 285 (ALTTDLPQTP). The chain crosses the membrane as a helical span at residues 286 to 300 (LVIGISYFITSLSYA). Topologically, residues 301–329 (NSCLNPFLYAFLDDSFRRSLRQLVSCRTA) are cytoplasmic.

The protein belongs to the G-protein coupled receptor 1 family.

The protein localises to the cell membrane. Its function is as follows. Interacts specifically with a number of opioid ligands. Receptor for neuropeptides B and W, which may be involved in neuroendocrine system regulation, food intake and the organization of other signals. The protein is Neuropeptides B/W receptor type 1 (Npbwr1) of Rattus norvegicus (Rat).